A 101-amino-acid chain; its full sequence is NAD(P)H-quinone oxidoreductase subunit 4L, chloroplastic (101 aa).

The next 3 helical transmembrane spans lie at 2-22 (MFERVLFLSVYLFSIGIYGLI), 32-52 (ICLELILNSINLNLVTFSDLF), and 61-81 (IFAIFVIALAAAEAAIGLSIL).

Belongs to the complex I subunit 4L family. As to quaternary structure, NDH is composed of at least 16 different subunits, 5 of which are encoded in the nucleus.

It is found in the plastid. It localises to the chloroplast thylakoid membrane. The enzyme catalyses a plastoquinone + NADH + (n+1) H(+)(in) = a plastoquinol + NAD(+) + n H(+)(out). It carries out the reaction a plastoquinone + NADPH + (n+1) H(+)(in) = a plastoquinol + NADP(+) + n H(+)(out). NDH shuttles electrons from NAD(P)H:plastoquinone, via FMN and iron-sulfur (Fe-S) centers, to quinones in the photosynthetic chain and possibly in a chloroplast respiratory chain. The immediate electron acceptor for the enzyme in this species is believed to be plastoquinone. Couples the redox reaction to proton translocation, and thus conserves the redox energy in a proton gradient. The polypeptide is NAD(P)H-quinone oxidoreductase subunit 4L, chloroplastic (Zea mays (Maize)).